Consider the following 557-residue polypeptide: Ras-specific guanine nucleotide-releasing factor RalGPS2 (557 aa).

Residues 49–287 form the Ras-GEF domain; that stretch reads TPEEYAGQIT…YKLSLKIEPG (239 aa). The segment at 283 to 314 is disordered; sequence KIEPGTSTPRSAASREDLVGPEVGASPQSGRK. Phosphoserine occurs at positions 293, 296, 308, and 311. The residue at position 326 (T326) is a Phosphothreonine. The PXXP motif lies at 327–330; that stretch reads PPSP. Phosphoserine occurs at positions 329 and 343. Residue T361 is modified to Phosphothreonine. Residues 368-409 are disordered; sequence RHLLDDSVMEPHAPSRGQAESSTLSSGISIGSSDGSELSEET. Position 374 is a phosphoserine (S374). The segment covering 387–403 has biased composition (low complexity); the sequence is ESSTLSSGISIGSSDGS. The PH domain occupies 431–543; the sequence is AVTIQGVLRR…WFKHLSAACQ (113 aa). Residues 433 to 557 form a required for stimulation of nucleotide exchange by RALA region; that stretch reads TIQGVLRRKT…QVPTNLMTFE (125 aa).

As to quaternary structure, interacts with the SH3 domains of GRB2 and PLCG1. Interacts with RALA.

The protein resides in the cytoplasm. Its subcellular location is the cell membrane. Guanine nucleotide exchange factor for the small GTPase RALA. May be involved in cytoskeletal organization. May also be involved in the stimulation of transcription in a Ras-independent fashion. The sequence is that of Ras-specific guanine nucleotide-releasing factor RalGPS2 (RALGPS2) from Macaca fascicularis (Crab-eating macaque).